The sequence spans 1361 residues: Protein CFT1 (1361 aa).

Residues A455–S493 form a disordered region. The span at N459–D478 shows a compositional bias: acidic residues. The span at Q479–S493 shows a compositional bias: polar residues.

It belongs to the CFT1 family.

The protein resides in the nucleus. In terms of biological role, RNA-binding component of the cleavage and polyadenylation factor (CPF) complex, which plays a key role in polyadenylation-dependent pre-mRNA 3'-end formation and cooperates with cleavage factors including the CFIA complex and NAB4/CFIB. Involved in poly(A) site recognition. May be involved in coupling transcription termination and mRNA 3'-end formation. This Candida glabrata (strain ATCC 2001 / BCRC 20586 / JCM 3761 / NBRC 0622 / NRRL Y-65 / CBS 138) (Yeast) protein is Protein CFT1 (CFT1).